The chain runs to 997 residues: uncharacterized protein (997 aa).

This sequence belongs to the MG414/MG415 family.

This is an uncharacterized protein from Mycoplasma pneumoniae (strain ATCC 29342 / M129 / Subtype 1) (Mycoplasmoides pneumoniae).